A 1023-amino-acid polypeptide reads, in one-letter code: FHIP family protein AGAP011705 (1023 aa).

3 stretches are compositionally biased toward polar residues: residues 1–13, 806–825, and 868–888; these read MSWLRSSPLRQSF, SMTSSLSQTTPMQLTPSSSY, and GLNHSPNGRQQPQSYTPASMN. Disordered regions lie at residues 1 to 39 and 797 to 927; these read MSWLRSSPLRQSFSKSGNNSNSNGGGSANDRSRSGAGGG and GKLL…AETQ. The span at 889-906 shows a compositional bias: low complexity; the sequence is VPSPVGQQQHQHQSVSSV.

It belongs to the FHIP family.

This is FHIP family protein AGAP011705 from Anopheles gambiae (African malaria mosquito).